A 174-amino-acid polypeptide reads, in one-letter code: ATP-dependent protease subunit HslV (174 aa).

T2 is an active-site residue. Na(+)-binding residues include G157, C160, and T163.

This sequence belongs to the peptidase T1B family. HslV subfamily. In terms of assembly, a double ring-shaped homohexamer of HslV is capped on each side by a ring-shaped HslU homohexamer. The assembly of the HslU/HslV complex is dependent on binding of ATP.

It localises to the cytoplasm. The enzyme catalyses ATP-dependent cleavage of peptide bonds with broad specificity.. Allosterically activated by HslU binding. Functionally, protease subunit of a proteasome-like degradation complex believed to be a general protein degrading machinery. This chain is ATP-dependent protease subunit HslV, found in Shewanella loihica (strain ATCC BAA-1088 / PV-4).